Here is an 859-residue protein sequence, read N- to C-terminus: Heterogeneous nuclear ribonucleoprotein U-like protein 1 (859 aa).

A necessary for interaction with HRMT1L1 region spans residues 1 to 103 (MDVRRLKVNE…GPDGHYVMDN (103 aa)). One can recognise an SAP domain in the interval 3–37 (VRRLKVNELREELQRRGLDTRGLKAELAERLLAAL). The segment at 36–131 (ALEAEEPEDE…SSYDRRPLDM (96 aa)) is disordered. The span at 38–54 (EAEEPEDERELEADDDP) shows a compositional bias: acidic residues. The segment covering 77–88 (QPPPPGLQPHPE) has biased composition (pro residues). Lysine 117 participates in a covalent cross-link: Glycyl lysine isopeptide (Lys-Gly) (interchain with G-Cter in SUMO1); alternate. A Glycyl lysine isopeptide (Lys-Gly) (interchain with G-Cter in SUMO2); alternate cross-link involves residue lysine 117. The span at 118–130 (QENESSYDRRPLD) shows a compositional bias: basic and acidic residues. Lysine 143 is covalently cross-linked (Glycyl lysine isopeptide (Lys-Gly) (interchain with G-Cter in SUMO1); alternate). Lysine 143 participates in a covalent cross-link: Glycyl lysine isopeptide (Lys-Gly) (interchain with G-Cter in SUMO2); alternate. A disordered region spans residues 146–206 (MKQEAPPSFL…QPPAEEDEDD (61 aa)). Residues lysine 147 and lysine 163 each participate in a glycyl lysine isopeptide (Lys-Gly) (interchain with G-Cter in SUMO2) cross-link. The segment covering 174-193 (RPFEENRGRGYFEHREDRRG) has biased composition (basic and acidic residues). Residues 192–389 (RGRSPQPPAE…VEFNFGQRAE (198 aa)) form the B30.2/SPRY domain. Serine 195 carries the post-translational modification Phosphoserine. Threonine 210 is modified (phosphothreonine). Positions 214–859 (IDTYNCDLHF…GSTQGGTSTQ (646 aa)) are necessary for interaction with TP53. Residues lysine 271 and lysine 450 each participate in a glycyl lysine isopeptide (Lys-Gly) (interchain with G-Cter in SUMO2) cross-link. Positions 457–595 (NAIMDKMRVM…EEADKLVRQY (139 aa)) are necessary for interaction with BRD7 and transcriptional activation. At serine 513 the chain carries Phosphoserine. Lysine 540 is covalently cross-linked (Glycyl lysine isopeptide (Lys-Gly) (interchain with G-Cter in SUMO2)). Residues 595–612 (YNEEGRKAGPPPEKRFDS) are compositionally biased toward basic and acidic residues. The disordered stretch occupies residues 595-814 (YNEEGRKAGP…PPTAQTYPQP (220 aa)). A run of 5 repeats spans residues 613 to 615 (RGG), 620 to 622 (RGG), 639 to 641 (RGG), 645 to 647 (RGG), and 659 to 661 (RGG). Gly residues-rich tracts occupy residues 613 to 626 (RGGGFRGRGGGGGF) and 634 to 670 (PPGGNRGGFQNRGGGGGSGGGGGNYRGGFNRSGGGGY). The interval 613 to 661 (RGGGFRGRGGGGGFQRYDNRGPPGGNRGGFQNRGGGGGSGGGGGNYRGG) is 5 X 3 AA repeats of R-G-G. Positions 613–661 (RGGGFRGRGGGGGFQRYDNRGPPGGNRGGFQNRGGGGGSGGGGGNYRGG) are necessary for transcription repression. The residue at position 639 (arginine 639) is an Asymmetric dimethylarginine. 2 positions are modified to asymmetric dimethylarginine; alternate: arginine 645 and arginine 659. An omega-N-methylarginine; alternate mark is found at arginine 645 and arginine 659. 2 positions are modified to omega-N-methylarginine: arginine 664 and arginine 674. Residues 671–696 (NQNRWGNNNRDNNNSNNRGNYNRAPQ) show a composition bias toward low complexity. The span at 697-720 (QQPPPQQPPPPQPPPQQPPPPPSY) shows a compositional bias: pro residues. A Phosphoserine modification is found at serine 721. The span at 728-744 (GASSYNKNSNIPGSSAN) shows a compositional bias: polar residues. The span at 745–775 (TSTPTVSSYTPPQPSYSQPPYNQGGYTQGYT) shows a compositional bias: low complexity. 2 stretches are compositionally biased toward pro residues: residues 776 to 786 (APPPPPPPPPA) and 796 to 807 (NPAPYTPPPPPT).

Interacts with BRD7, PRMT2, TP53 and NXF1. Associates with histones and BRD7. Post-translationally, methylated.

Its subcellular location is the nucleus. In terms of biological role, acts as a basic transcriptional regulator. Represses basic transcription driven by several virus and cellular promoters. When associated with BRD7, activates transcription of glucocorticoid-responsive promoter in the absence of ligand-stimulation. Also plays a role in mRNA processing and transport. Binds avidly to poly(G) and poly(C) RNA homopolymers in vitro. The chain is Heterogeneous nuclear ribonucleoprotein U-like protein 1 (Hnrnpul1) from Mus musculus (Mouse).